Here is a 362-residue protein sequence, read N- to C-terminus: UDP-arabinopyranose mutase 3 (362 aa).

Residues Asp-106–Asp-108 carry the DXD motif motif. N-linked (Glc...) arginine glycosylation occurs at Arg-154.

It belongs to the RGP family. Heterodimer with RGP1. Mn(2+) serves as cofactor. The cofactor is Mg(2+). Post-translationally, reversibly glycosylated in vitro by UDP-glucose, UDP-xylose and UDP-galactose, but not UDP-mannose. As to expression, specifically expressed in developing seeds.

The protein localises to the cytoplasm. It is found in the cytosol. It localises to the golgi apparatus. The catalysed reaction is UDP-beta-L-arabinofuranose = UDP-beta-L-arabinopyranose. Its function is as follows. UDP-L-arabinose mutase involved in the biosynthesis of cell wall non-cellulosic polysaccharides. Catalyzes the interconvertion of UDP-L-arabinopyranose (UDP-Arap) and UDP-L-arabinofuranose (UDP-Araf). Preferentially catalyzes the formation of UDP-Arap from UDP-Araf. At thermodynamic equilibrium in vitro the ratio of the pyranose form over the furanose form is 95:5. Is not active on other UDP-sugars (UDP-Gal, UDP-Xyl, UDP-Glc, GDP-Man and GDP-Fuc). Is probably active as heteromer in vivo. This chain is UDP-arabinopyranose mutase 3, found in Arabidopsis thaliana (Mouse-ear cress).